The primary structure comprises 238 residues: Large ribosomal subunit protein uL1 (238 aa).

The protein belongs to the universal ribosomal protein uL1 family. In terms of assembly, part of the 50S ribosomal subunit.

Its function is as follows. Binds directly to 23S rRNA. The L1 stalk is quite mobile in the ribosome, and is involved in E site tRNA release. In terms of biological role, protein L1 is also a translational repressor protein, it controls the translation of the L11 operon by binding to its mRNA. In Trichormus variabilis (strain ATCC 29413 / PCC 7937) (Anabaena variabilis), this protein is Large ribosomal subunit protein uL1.